A 470-amino-acid polypeptide reads, in one-letter code: ATP synthase subunit beta (470 aa).

156–163 (GGAGVGKT) is an ATP binding site.

This sequence belongs to the ATPase alpha/beta chains family. As to quaternary structure, F-type ATPases have 2 components, CF(1) - the catalytic core - and CF(0) - the membrane proton channel. CF(1) has five subunits: alpha(3), beta(3), gamma(1), delta(1), epsilon(1). CF(0) has three main subunits: a(1), b(2) and c(9-12). The alpha and beta chains form an alternating ring which encloses part of the gamma chain. CF(1) is attached to CF(0) by a central stalk formed by the gamma and epsilon chains, while a peripheral stalk is formed by the delta and b chains.

Its subcellular location is the cell inner membrane. The catalysed reaction is ATP + H2O + 4 H(+)(in) = ADP + phosphate + 5 H(+)(out). In terms of biological role, produces ATP from ADP in the presence of a proton gradient across the membrane. The catalytic sites are hosted primarily by the beta subunits. The sequence is that of ATP synthase subunit beta from Nitratidesulfovibrio vulgaris (strain ATCC 29579 / DSM 644 / CCUG 34227 / NCIMB 8303 / VKM B-1760 / Hildenborough) (Desulfovibrio vulgaris).